We begin with the raw amino-acid sequence, 400 residues long: tRNA(Met) cytidine acetate ligase (400 aa).

ATP is bound by residues 7–20, Gly-101, Asn-159, and Arg-184; that span reads IVEY…HLYH.

This sequence belongs to the TmcAL family.

It localises to the cytoplasm. It carries out the reaction cytidine(34) in elongator tRNA(Met) + acetate + ATP = N(4)-acetylcytidine(34) in elongator tRNA(Met) + AMP + diphosphate. Catalyzes the formation of N(4)-acetylcytidine (ac(4)C) at the wobble position of elongator tRNA(Met), using acetate and ATP as substrates. First activates an acetate ion to form acetyladenylate (Ac-AMP) and then transfers the acetyl group to tRNA to form ac(4)C34. The protein is tRNA(Met) cytidine acetate ligase of Caldicellulosiruptor saccharolyticus (strain ATCC 43494 / DSM 8903 / Tp8T 6331).